The following is a 1414-amino-acid chain: Calcium-transporting ATPase 2 (1414 aa).

Disordered stretches follow at residues 1–231 (MSRN…PSRL) and 265–294 (AVGT…QWRA). Residues 1–327 (MSRNNPPPVI…LLMWLAFKDK (327 aa)) are Cytoplasmic-facing. Composition is skewed to low complexity over residues 33-53 (PTPT…PESP) and 75-96 (SPTP…SSSS). Over residues 179 to 189 (DGDRGEDDANK) the composition is skewed to basic and acidic residues. Residues 190–201 (KGKKDKKGKKGK) are compositionally biased toward basic residues. Residues 202–229 (KDKEEPPSAHLDPDKDKTDPTPFREKPS) show a composition bias toward basic and acidic residues. A helical transmembrane segment spans residues 328 to 348 (VLILLSVAAVVSLALGLYQDL). Residues 349–370 (GTPPKIIYNDECPDGCEEAQVD) are Vacuolar-facing. The helical transmembrane segment at 371–391 (WVEGVAIVVAIIIVVLVGSIN) threads the bilayer. The Cytoplasmic segment spans residues 392 to 541 (DWQKERQFKK…TPLQIKLNHL (150 aa)). The chain crosses the membrane as a helical span at residues 542–562 (AELIAKLGGASGLLLFIALMI). Residues 563–585 (RFFVQLKTNPDRSANDKAQSFIQ) are Vacuolar-facing. Residues 586-606 (ILIIAVTLVVVAVPEGLPLAV) traverse the membrane as a helical segment. Residues Val-595 and Glu-600 each coordinate Ca(2+). Over 607–1040 (TLALAFATKR…GRCVNDSVKK (434 aa)) the chain is Cytoplasmic. Asp-642 serves as the catalytic 4-aspartylphosphate intermediate. Mg(2+) is bound by residues Asp-642 and Thr-644. Residues Thr-644, Glu-737, Arg-779, 909–911 (TGD), Arg-958, and Lys-964 contribute to the ATP site. Asp-983 is a Mg(2+) binding site. Position 986 (Asn-986) interacts with ATP. A helical transmembrane segment spans residues 1041 to 1061 (FLQFQISVNITAVFITFISAV). A Ca(2+)-binding site is contributed by Asn-1049. Residues 1062–1068 (ASSSEES) lie on the Vacuolar side of the membrane. A helical membrane pass occupies residues 1069–1089 (VLTAVQLLWVNLIMDTFAALA). Positions 1079 and 1083 each coordinate Ca(2+). The Cytoplasmic segment spans residues 1090–1118 (LATDPATESSLDRKPDRKNAPLITVEMFK). Residues 1119–1139 (MIMVQAIYQIIVCLVLHFAGL) form a helical membrane-spanning segment. At 1140 to 1153 (KILGLEDNDQNNTE) the chain is on the vacuolar side. Residues 1154–1171 (LGALVFNCFVFCQIFNQL) traverse the membrane as a helical segment. Topologically, residues 1172–1191 (NCRRLDRKLNVLEGFWRNWY) are cytoplasmic. A helical transmembrane segment spans residues 1192–1212 (FIIIFLIMVGGQILIVEVGGA). Glu-1208 contacts Ca(2+). At 1213–1223 (AFQVTRLGGRD) the chain is on the vacuolar side. A helical transmembrane segment spans residues 1224 to 1244 (WGITLVIGALSLPIGALVRLT). Residues 1245–1414 (PTGPFARLLV…GLSSGDANNV (170 aa)) lie on the Cytoplasmic side of the membrane. The interval 1376-1414 (PRTNPDDPLYAKFGLQPPESRGSSVSGAEGLSSGDANNV) is disordered.

Belongs to the cation transport ATPase (P-type) (TC 3.A.3) family.

The protein localises to the vacuole membrane. The catalysed reaction is Ca(2+)(in) + ATP + H2O = Ca(2+)(out) + ADP + phosphate + H(+). Its function is as follows. This magnesium-dependent enzyme catalyzes the hydrolysis of ATP coupled with the transport of calcium. Transports calcium to the vacuole and participates in the control of cytosolic free calcium. The protein is Calcium-transporting ATPase 2 of Cryptococcus neoformans var. grubii serotype A (strain H99 / ATCC 208821 / CBS 10515 / FGSC 9487) (Filobasidiella neoformans var. grubii).